Reading from the N-terminus, the 144-residue chain is Large ribosomal subunit protein uL15 (144 aa).

The disordered stretch occupies residues 1 to 58 (MKLNTLSPAAGAKHAAKRVGRGIGSGLGKTAGRGHKGQKSRSGGSIRPGFEGGQMPLK). The segment covering 21–31 (RGIGSGLGKTA) has biased composition (gly residues).

Belongs to the universal ribosomal protein uL15 family. Part of the 50S ribosomal subunit.

Its function is as follows. Binds to the 23S rRNA. This chain is Large ribosomal subunit protein uL15, found in Psychromonas ingrahamii (strain DSM 17664 / CCUG 51855 / 37).